We begin with the raw amino-acid sequence, 624 residues long: Actin-related protein 8 (624 aa).

Position 1 is an N-acetylmethionine (methionine 1). Positions 1 to 25 (MTQAEKGDTENGKEKGGEKEKEQRG) are enriched in basic and acidic residues. Positions 1 to 29 (MTQAEKGDTENGKEKGGEKEKEQRGVKRP) are disordered. ATP contacts are provided by serine 55 and threonine 56. Serine 132 is subject to Phosphoserine. 283–286 (DVGD) is a binding site for ATP. Serine 412 carries the phosphoserine modification. Positions 430–462 (SKQEQSAKATADRKSASKPIGFEGDLRGQSSDL) are disordered.

The protein belongs to the actin family. ARP8 subfamily. Component of the chromatin remodeling INO80 complex; specifically part of a complex module associated with the DBINO domain of INO80. Exists as monomers and dimers, but the dimer is most probably the biologically relevant form required for stable interactions with histones that exploits the twofold symmetry of the nucleosome core.

The protein resides in the nucleus. Its subcellular location is the chromosome. Its function is as follows. Plays an important role in the functional organization of mitotic chromosomes. Exhibits low basal ATPase activity, and unable to polymerize. Functionally, proposed core component of the chromatin remodeling INO80 complex which is involved in transcriptional regulation, DNA replication and probably DNA repair. Required for the recruitment of INO80 (and probably the INO80 complex) to sites of DNA damage Strongly prefer nucleosomes and H3-H4 tetramers over H2A-H2B dimers, suggesting it may act as a nucleosome recognition module within the complex. This is Actin-related protein 8 (ACTR8) from Pongo abelii (Sumatran orangutan).